Consider the following 566-residue polypeptide: Tissue-type plasminogen activator (566 aa).

The first 21 residues, 1-21 (MMSAMKTEFLCVLLLCGAVFT), serve as a signal peptide directing secretion. The propeptide occupies 22–33 (SPSQETYRRLRR). A propeptide spans 34–36 (GAR) (removed by plasmin). Positions 40 to 82 (VTCRDGKTQMTYRQHDSWLRPLLRGNQVEHCWCDGGRAQCHSV) constitute a Fibronectin type-I domain. 17 disulfide bridges follow: cysteine 42/cysteine 72, cysteine 70/cysteine 79, cysteine 87/cysteine 98, cysteine 92/cysteine 109, cysteine 111/cysteine 120, cysteine 128/cysteine 209, cysteine 149/cysteine 191, cysteine 180/cysteine 204, cysteine 219/cysteine 300, cysteine 240/cysteine 282, cysteine 271/cysteine 295, cysteine 303/cysteine 434, cysteine 346/cysteine 362, cysteine 354/cysteine 423, cysteine 448/cysteine 523, cysteine 480/cysteine 496, and cysteine 513/cysteine 541. The interval 43 to 53 (RDGKTQMTYRQ) is important for binding to annexin A2. In terms of domain architecture, EGF-like spans 83–121 (PVRSCSEPWCFNGGTCRQALYSSDFVCQCPEGFMGKLCE). 2 consecutive Kringle domains span residues 128-209 (CYKD…TPAC) and 219-300 (CYTG…VPQC). Asparagine 153 carries N-linked (GlcNAc...) asparagine glycosylation. The 251-residue stretch at 315–565 (IKGGLFADIT…YLDWIRDNTR (251 aa)) folds into the Peptidase S1 domain. Catalysis depends on charge relay system residues histidine 361 and aspartate 410. A glycan (N-linked (GlcNAc...) asparagine) is linked at asparagine 487. Serine 517 acts as the Charge relay system in catalysis.

The protein belongs to the peptidase S1 family. As to quaternary structure, heterodimer of chain A and chain B held by a disulfide bond. Binds to fibrin with high affinity. This interaction leads to an increase in the catalytic efficiency of the enzyme due to an increase in affinity for plasminogen. Similarly, binding to heparin increases the activation of plasminogen. Binds to annexin A2, cytokeratin-8, fibronectin and laminin. Binds to mannose receptor and the low-density lipoprotein receptor-related protein (LRP1); these proteins are involved in TPA clearance. Binds LRP1B; binding is followed by internalization and degradation. Forms heterodimer with SERPINA5. Interacts with SERPINE1. In complex with SERPINE1, interacts with SORL1. The single chain, almost fully active enzyme, can be further processed into a two-chain fully active form by a cleavage after Arg-314 catalyzed by plasmin, tissue kallikrein or factor Xa.

Its subcellular location is the secreted. It localises to the extracellular space. It carries out the reaction Specific cleavage of Arg-|-Val bond in plasminogen to form plasmin.. Its activity is regulated as follows. Inhibited by SERPINA5. Inhibited by SERPINE1. Converts the abundant, but inactive, zymogen plasminogen to plasmin by hydrolyzing a single Arg-Val bond in plasminogen. By controlling plasmin-mediated proteolysis, it plays an important role in tissue remodeling and degradation, in cell migration and many other physiopathological events. During oocyte activation, plays a role in cortical granule reaction in the zona reaction, which contributes to the block to polyspermy. This Bos taurus (Bovine) protein is Tissue-type plasminogen activator (PLAT).